The chain runs to 115 residues: MYDEHYTRLNQYRSLWILVFFDLPTETRKERKIASEFRKKLLDDGFSMFQFSIYIRFCASRENAEVHTKRIRNSLPEHGKIGVMQITDKQFGMMELFYGKKPVETDKPSQQLELF.

Asp-22 is a Mg(2+) binding site.

Belongs to the CRISPR-associated endoribonuclease Cas2 protein family. As to quaternary structure, homodimer, forms a heterotetramer with a Cas1 homodimer. The cofactor is Mg(2+).

CRISPR (clustered regularly interspaced short palindromic repeat), is an adaptive immune system that provides protection against mobile genetic elements (viruses, transposable elements and conjugative plasmids). CRISPR clusters contain sequences complementary to antecedent mobile elements and target invading nucleic acids. CRISPR clusters are transcribed and processed into CRISPR RNA (crRNA). Functions as a ssRNA-specific endoribonuclease. Involved in the integration of spacer DNA into the CRISPR cassette. This Flavobacterium psychrophilum (strain ATCC 49511 / DSM 21280 / CIP 103535 / JIP02/86) protein is CRISPR-associated endoribonuclease Cas2.